A 377-amino-acid polypeptide reads, in one-letter code: Adaptive-response sensory kinase SasA (377 aa).

Residues 154–373 form the Histidine kinase domain; sequence MLVHDLRSPL…SFHFTLPVYR (220 aa). H157 is subject to Phosphohistidine; by autocatalysis.

As to quaternary structure, homooligomerizes. Interacts with KaiC. Participates in the KaiABC clock complex, whose core is composed of a KaiC homohexamer, 6 KaiB and up to 6 KaiA dimers. SasA and KaiB(fs) compete to bind to KaiC.

It carries out the reaction ATP + protein L-histidine = ADP + protein N-phospho-L-histidine.. Its function is as follows. Member of the two-component regulatory system SasA/RpaA involved in genome-wide circadian gene expression. One of several clock output pathways. Participates in the Kai clock protein complex, the main circadian regulator in cyanobacteria, via its interaction with KaiC. KaiC enhances the autophosphorylation activity of SasA, which then transfers its phosphate group to RpaA to activate it. In addition to its output function, recruits fold-shifted KaiB (KaiB(fs)) to KaiC to cooperatively form the KaiB(6):KaiC(6) complex (independent of SasA kinase activity). Required for robustness of the circadian rhythm of gene expression and is involved in clock output, also required for adaptation to light/dark cycles. The sequence is that of Adaptive-response sensory kinase SasA from Synechococcus sp. (strain JA-2-3B'a(2-13)) (Cyanobacteria bacterium Yellowstone B-Prime).